We begin with the raw amino-acid sequence, 196 residues long: Dephospho-CoA kinase (196 aa).

The region spanning 5 to 196 (IIGLTGGIAT…QVDIALNFEL (192 aa)) is the DPCK domain. 13–18 (ATGKTT) is an ATP binding site.

Belongs to the CoaE family.

It localises to the cytoplasm. The enzyme catalyses 3'-dephospho-CoA + ATP = ADP + CoA + H(+). Its pathway is cofactor biosynthesis; coenzyme A biosynthesis; CoA from (R)-pantothenate: step 5/5. Catalyzes the phosphorylation of the 3'-hydroxyl group of dephosphocoenzyme A to form coenzyme A. This Trichormus variabilis (strain ATCC 29413 / PCC 7937) (Anabaena variabilis) protein is Dephospho-CoA kinase.